Reading from the N-terminus, the 551-residue chain is Rqc2 homolog RqcH (551 aa).

The required for fibronectin binding stretch occupies residues 363-551 (YQKLKEAVKY…SKKIASMKKS (189 aa)).

Belongs to the NEMF family. As to quaternary structure, associates with stalled 50S ribosomal subunits, binds to RqcP. Interacts with human fibronectin.

The protein resides in the cell surface. It localises to the cytoplasm. In terms of biological role, key component of the ribosome quality control system (RQC), a ribosome-associated complex that mediates the extraction of incompletely synthesized nascent chains from stalled ribosomes and their subsequent degradation. RqcH recruits Ala-charged tRNA, and with RqcP directs the elongation of stalled nascent chains on 50S ribosomal subunits, leading to non-templated C-terminal alanine extensions (Ala tail). The Ala tail promotes nascent chain degradation. May add between 1 and at least 8 Ala residues. Binds to stalled 50S ribosomal subunits. Functionally, recombinant protein binds to immobilized human fibronectin; binding is saturable and competed by heparin. Recombinant protein inhibits binding of whole cells to fibronectin. In Streptococcus pneumoniae (strain ATCC BAA-255 / R6), this protein is Rqc2 homolog RqcH.